We begin with the raw amino-acid sequence, 185 residues long: Meiotic expression up-regulated protein 31 (185 aa).

In Schizosaccharomyces pombe (strain 972 / ATCC 24843) (Fission yeast), this protein is Meiotic expression up-regulated protein 31 (meu31).